The primary structure comprises 330 residues: mRNA-capping enzyme (330 aa).

Residue Lys-82 is the N6-GMP-lysine intermediate of the active site.

Belongs to the eukaryotic GTase family. As to quaternary structure, monomer. Mg(2+) is required as a cofactor. Requires Mn(2+) as cofactor.

It catalyses the reaction a 5'-end diphospho-ribonucleoside in mRNA + GTP + H(+) = a 5'-end (5'-triphosphoguanosine)-ribonucleoside in mRNA + diphosphate. Functionally, mRNA capping. Transfers a GMP cap onto the end of mRNA that terminates with a 5'-diphosphate tail. This chain is mRNA-capping enzyme, found in Chlorella (PBCV-1).